A 188-amino-acid chain; its full sequence is UPF0398 protein SE_1135 (188 aa).

It belongs to the UPF0398 family.

This chain is UPF0398 protein SE_1135, found in Staphylococcus epidermidis (strain ATCC 12228 / FDA PCI 1200).